A 450-amino-acid chain; its full sequence is Sorting nexin-4 (450 aa).

M1 carries the N-acetylmethionine modification. The segment at M1–D46 is disordered. S22 bears the Phosphoserine mark. One can recognise a PX domain in the interval S61–W187. Residues R106, S108, K132, and R154 each contribute to the a 1,2-diacyl-sn-glycero-3-phospho-(1D-myo-inositol-3-phosphate) site.

This sequence belongs to the sorting nexin family. In terms of assembly, heterodimer; heterodimerizes with SNX7 or SNX30. Interacts with WWC1/KIBRA. Identified in a complex with WWC1/KIBRA and dynein components DYNLL1 and DYNC1I2. Interacts with BIN1.

Its subcellular location is the early endosome membrane. Its function is as follows. Involved in the regulation of endocytosis and in several stages of intracellular trafficking. Plays a role in recycling endocytosed transferrin receptor and prevent its degradation. Involved in autophagosome assembly by regulating trafficking and recycling of phospholipid scramblase ATG9A. The protein is Sorting nexin-4 of Homo sapiens (Human).